A 209-amino-acid chain; its full sequence is Large ribosomal subunit protein bL9 (209 aa).

The interval 169–209 is disordered; that stretch reads RDGASFTEDYDPNAEPGLATEAEEAVADADDNAETNSEESL. The segment covering 189–209 has biased composition (acidic residues); the sequence is EAEEAVADADDNAETNSEESL.

It belongs to the bacterial ribosomal protein bL9 family.

Binds to the 23S rRNA. In Zymomonas mobilis subsp. mobilis (strain ATCC 31821 / ZM4 / CP4), this protein is Large ribosomal subunit protein bL9.